Reading from the N-terminus, the 401-residue chain is Acetate kinase (401 aa).

Asparagine 10 contributes to the Mg(2+) binding site. Lysine 17 contributes to the ATP binding site. Arginine 91 is a binding site for substrate. Catalysis depends on aspartate 150, which acts as the Proton donor/acceptor. ATP contacts are provided by residues 210-214 (HLGNG), 285-287 (DCR), and 333-337 (GIGEN). Glutamate 387 is a Mg(2+) binding site.

The protein belongs to the acetokinase family. In terms of assembly, homodimer. The cofactor is Mg(2+). Mn(2+) is required as a cofactor.

It is found in the cytoplasm. The enzyme catalyses acetate + ATP = acetyl phosphate + ADP. It participates in metabolic intermediate biosynthesis; acetyl-CoA biosynthesis; acetyl-CoA from acetate: step 1/2. Its function is as follows. Catalyzes the formation of acetyl phosphate from acetate and ATP. Can also catalyze the reverse reaction. This Pasteurella multocida (strain Pm70) protein is Acetate kinase.